Reading from the N-terminus, the 84-residue chain is Small ribosomal subunit protein bS20 (84 aa).

Belongs to the bacterial ribosomal protein bS20 family.

Binds directly to 16S ribosomal RNA. The sequence is that of Small ribosomal subunit protein bS20 from Ligilactobacillus salivarius (strain UCC118) (Lactobacillus salivarius).